Reading from the N-terminus, the 456-residue chain is Hydroxyproline dehydrogenase (456 aa).

An N6-acetyllysine mark is found at lysine 310 and lysine 320.

It belongs to the proline oxidase family. FAD serves as cofactor.

The enzyme catalyses trans-4-hydroxy-L-proline + a quinone = (3R,5S)-1-pyrroline-3-hydroxy-5-carboxylate + a quinol + H(+). It carries out the reaction L-proline + a quinone = (S)-1-pyrroline-5-carboxylate + a quinol + H(+). Its function is as follows. Dehydrogenase that converts trans-4-L-hydroxyproline to delta-1-pyrroline-3-hydroxy-5-carboxylate (Hyp) using ubiquinone-10 as the terminal electron acceptor. Can also use proline as a substrate but with a very much lower efficiency. Does not react with other diastereomers of Hyp: trans-4-D-hydroxyproline and cis-4-L-hydroxyproline. Ubiquininone analogs such as menadione, duroquinone and ubiquinone-1 react more efficiently than oxygen as the terminal electron acceptor during catalysis. The chain is Hydroxyproline dehydrogenase from Rattus norvegicus (Rat).